A 224-amino-acid polypeptide reads, in one-letter code: Dehydration-responsive element-binding protein 1G (224 aa).

Residues 1–16 show a composition bias toward polar residues; sequence MDVSAALSSDYSSGTP. Residues 1 to 46 are disordered; the sequence is MDVSAALSSDYSSGTPSPVAADADDGSSAYMTVSSAPPKRRAGRTK. A DNA-binding region (AP2/ERF) is located at residues 54–111; the sequence is VFKGVRRRNPGRWVCEVREPHGKQRIWLGTFETAEMAARAHDVAALALRGRAACLNFA.

It belongs to the AP2/ERF transcription factor family. ERF subfamily.

The protein resides in the nucleus. Transcriptional activator that binds specifically to the DNA sequence 5'-[AG]CCGAC-3'. Binding to the C-repeat/DRE element mediates high salinity- and dehydration-inducible transcription. This is Dehydration-responsive element-binding protein 1G (DREB1G) from Oryza sativa subsp. indica (Rice).